The following is a 340-amino-acid chain: GTP 3',8-cyclase (340 aa).

In terms of domain architecture, Radical SAM core spans 20-246 (RFQRQYTYLR…PKAVNDGPAK (227 aa)). Position 29 (Arg29) interacts with GTP. Residues Cys36 and Cys40 each coordinate [4Fe-4S] cluster. Tyr42 serves as a coordination point for S-adenosyl-L-methionine. Residue Cys43 coordinates [4Fe-4S] cluster. Position 79 (Arg79) interacts with GTP. Residue Gly83 coordinates S-adenosyl-L-methionine. Residue Thr110 coordinates GTP. S-adenosyl-L-methionine is bound at residue Ser134. Lys171 is a binding site for GTP. S-adenosyl-L-methionine is bound at residue Met205. 2 residues coordinate [4Fe-4S] cluster: Cys268 and Cys271. Position 273–275 (273–275 (RLR)) interacts with GTP. Cys285 lines the [4Fe-4S] cluster pocket.

This sequence belongs to the radical SAM superfamily. MoaA family. Monomer and homodimer. [4Fe-4S] cluster serves as cofactor.

The catalysed reaction is GTP + AH2 + S-adenosyl-L-methionine = (8S)-3',8-cyclo-7,8-dihydroguanosine 5'-triphosphate + 5'-deoxyadenosine + L-methionine + A + H(+). The protein operates within cofactor biosynthesis; molybdopterin biosynthesis. Its function is as follows. Catalyzes the cyclization of GTP to (8S)-3',8-cyclo-7,8-dihydroguanosine 5'-triphosphate. This is GTP 3',8-cyclase from Haemophilus ducreyi (strain 35000HP / ATCC 700724).